Here is a 152-residue protein sequence, read N- to C-terminus: Ribosome maturation factor RimP (152 aa).

It belongs to the RimP family.

It localises to the cytoplasm. Required for maturation of 30S ribosomal subunits. In Stutzerimonas stutzeri (strain A1501) (Pseudomonas stutzeri), this protein is Ribosome maturation factor RimP.